A 92-amino-acid polypeptide reads, in one-letter code: SPbeta prophage-derived uncharacterized protein YopY (92 aa).

In Bacillus subtilis (strain 168), this protein is SPbeta prophage-derived uncharacterized protein YopY (yopY).